Here is a 78-residue protein sequence, read N- to C-terminus: Longicornsin (78 aa).

Positions 1–22 (MAESTTTCFLLLVTGYVTAVMS) are cleaved as a signal peptide. Residues 23–29 (EEAHLRS) constitute a propeptide that is removed on maturation. Intrachain disulfides connect cysteine 35–cysteine 58, cysteine 43–cysteine 63, and cysteine 47–cysteine 65.

In terms of tissue distribution, salivary glands (at protein level).

It is found in the secreted. In terms of biological role, has antibacterial activity against the Gram-positive bacteria S.aureus ATCC2592 (MIC=0.8 ug/ml), S.aureus 6A (MIC=0.8 ug/ml) and S.aureus 15A (MIC=1.6 ug/ml), and against the Gram-negative bacteria E.coli ATCC 25922 (MIC=3.2 ug/ml), E.coli 23A (MIC=6.4 ug/ml), E.coli 27A (MIC=6.4 ug/ml), P.aeruginosa 3A (MIC=3.2 ug/ml), P.aeruginosa 7A (MIC=0.8 ug/ml) and H.pylori NCTC11637 (MIC=6.4 ug/ml). Has antifungal activity against C.albidus ATCC2002 (MIC=25.6 ug/ml). Very low hemolytic activity against rabbit erythrocytes. This is Longicornsin from Haemaphysalis longicornis (Bush tick).